A 229-amino-acid polypeptide reads, in one-letter code: NAD(P)H-quinone oxidoreductase subunit K, chloroplastic (229 aa).

Residues Cys-43, Cys-44, Cys-108, and Cys-139 each coordinate [4Fe-4S] cluster.

The protein belongs to the complex I 20 kDa subunit family. As to quaternary structure, NDH is composed of at least 16 different subunits, 5 of which are encoded in the nucleus. [4Fe-4S] cluster serves as cofactor.

The protein localises to the plastid. It localises to the chloroplast thylakoid membrane. It catalyses the reaction a plastoquinone + NADH + (n+1) H(+)(in) = a plastoquinol + NAD(+) + n H(+)(out). It carries out the reaction a plastoquinone + NADPH + (n+1) H(+)(in) = a plastoquinol + NADP(+) + n H(+)(out). Functionally, NDH shuttles electrons from NAD(P)H:plastoquinone, via FMN and iron-sulfur (Fe-S) centers, to quinones in the photosynthetic chain and possibly in a chloroplast respiratory chain. The immediate electron acceptor for the enzyme in this species is believed to be plastoquinone. Couples the redox reaction to proton translocation, and thus conserves the redox energy in a proton gradient. In Piper cenocladum (Ant piper), this protein is NAD(P)H-quinone oxidoreductase subunit K, chloroplastic.